Reading from the N-terminus, the 348-residue chain is Beta-hexosaminidase (348 aa).

Substrate-binding positions include Asp-62, Arg-70, Arg-134, and 164-165; that span reads KH. His-177 functions as the Proton donor/acceptor in the catalytic mechanism. The active-site Nucleophile is Asp-249.

Belongs to the glycosyl hydrolase 3 family. NagZ subfamily.

The protein resides in the cytoplasm. The enzyme catalyses Hydrolysis of terminal non-reducing N-acetyl-D-hexosamine residues in N-acetyl-beta-D-hexosaminides.. It participates in cell wall biogenesis; peptidoglycan recycling. In terms of biological role, plays a role in peptidoglycan recycling by cleaving the terminal beta-1,4-linked N-acetylglucosamine (GlcNAc) from peptide-linked peptidoglycan fragments, giving rise to free GlcNAc, anhydro-N-acetylmuramic acid and anhydro-N-acetylmuramic acid-linked peptides. The protein is Beta-hexosaminidase of Histophilus somni (strain 2336) (Haemophilus somnus).